A 347-amino-acid chain; its full sequence is GMP reductase (347 aa).

108–131 (ADFEKTKQILDLNPALNFVCIDVA) is a binding site for NADP(+). K(+) contacts are provided by glycine 181 and glycine 183. Cysteine 186 serves as the catalytic Thioimidate intermediate. Residue 216 to 239 (IVSDGGCTTPGDVAKAFGGGADFV) participates in NADP(+) binding.

The protein belongs to the IMPDH/GMPR family. GuaC type 1 subfamily. As to quaternary structure, homotetramer.

It catalyses the reaction IMP + NH4(+) + NADP(+) = GMP + NADPH + 2 H(+). Catalyzes the irreversible NADPH-dependent deamination of GMP to IMP. It functions in the conversion of nucleobase, nucleoside and nucleotide derivatives of G to A nucleotides, and in maintaining the intracellular balance of A and G nucleotides. This chain is GMP reductase, found in Shigella boydii serotype 18 (strain CDC 3083-94 / BS512).